Consider the following 899-residue polypeptide: MFVRSSWLLLWGTIVWASAEPVTLHIGGTFPMESGSGGWAGGEACLPAVEMALKDVNSRLDILPGYVLNMTNHNSQCQPGLAMQQLYDFLYKPPTKLMLLTGCSPVTTVIAEAAPVWKLVVLSYGGSSPALSNRNRFPTLFRTHPSANMQNPTRIHIMEKFKWKRFTILMSVEEVFVTTAKDLEAIARKKGIKVDRQSFYGDPTDAMKTLQRQDARIIVGLFYVTEARKVLCQAYHHGLYGRRYVWFFIGWYADTWYIPPPEEHLNCTAEQMTEAAEYHFTTESVMLSRDNIPAISEMTGMQFQQRLTQYFQKDTANVGGFPEAPLAYDAVWALALAFNCTRNNLPSHIRLENFTYDNKVIADTLFQCVKNTSFRGVSGKVMFSDSGDRIARTQIEQMQGGKYKIMGYYDTTSGDLEWYNKEQWLNGKGPPPDSTVIKKHAMTVSNEFYYPTILFAVLGIAACVFIYLFTQKHHERLIIFQSQPECNNILLIGCSLCLFSLFLIGLPSDDISISESLFPLLCHARVTILLFGFTFAYGSMFAKVWIVHRMGATENQQLASRQKDEEENTPWEGIRTLISTMVGRQALMRKSSGQAYGALLEKRNTVLNQPISSSKFYVIVAALTAVDVFVCFVWVLIDPLHLTEQKFPLFTPADSEEDEMIMPVLQQCQSNQQEVWIGIIMGFKCLLLVFGTFLSYETRNLKLRFINDSRFVGLAIYNVAVMTLVTAPVVTLLIHGKVDANFAFISLTVLICTYISVGLIYGPKIRHIIKVPPSADEIQLNGNVGPGVMSKVDQKRYDMLKKENETLQIQIEEKERKIHECKERLEELTKNSETEDMNAQLLCENDKQIADENLTYSTATTLTTTIPLIDLQNGNHPGQIYENDNDDDGSSTSSDEILL.

A signal peptide spans 1–19 (MFVRSSWLLLWGTIVWASA). Topologically, residues 20–447 (EPVTLHIGGT…KKHAMTVSNE (428 aa)) are extracellular. Asparagine 69, asparagine 266, asparagine 339, asparagine 353, and asparagine 371 each carry an N-linked (GlcNAc...) asparagine glycan. The chain crosses the membrane as a helical span at residues 448–468 (FYYPTILFAVLGIAACVFIYL). Topologically, residues 469–487 (FTQKHHERLIIFQSQPECN) are cytoplasmic. Residues 488 to 508 (NILLIGCSLCLFSLFLIGLPS) traverse the membrane as a helical segment. Residues 509–525 (DDISISESLFPLLCHAR) lie on the Extracellular side of the membrane. A helical membrane pass occupies residues 526 to 546 (VTILLFGFTFAYGSMFAKVWI). The Cytoplasmic segment spans residues 547 to 616 (VHRMGATENQ…LNQPISSSKF (70 aa)). A helical transmembrane segment spans residues 617-637 (YVIVAALTAVDVFVCFVWVLI). Over 638 to 674 (DPLHLTEQKFPLFTPADSEEDEMIMPVLQQCQSNQQE) the chain is Extracellular. Residues 675-695 (VWIGIIMGFKCLLLVFGTFLS) traverse the membrane as a helical segment. The Cytoplasmic portion of the chain corresponds to 696 to 713 (YETRNLKLRFINDSRFVG). Residues 714 to 734 (LAIYNVAVMTLVTAPVVTLLI) form a helical membrane-spanning segment. Over 735 to 741 (HGKVDAN) the chain is Extracellular. A helical membrane pass occupies residues 742–762 (FAFISLTVLICTYISVGLIYG). Residues 763-899 (PKIRHIIKVP…SSTSSDEILL (137 aa)) lie on the Cytoplasmic side of the membrane. A coiled-coil region spans residues 791 to 842 (KVDQKRYDMLKKENETLQIQIEEKERKIHECKERLEELTKNSETEDMNAQLL). The tract at residues 870–899 (DLQNGNHPGQIYENDNDDDGSSTSSDEILL) is disordered. Low complexity predominate over residues 890 to 899 (SSTSSDEILL).

Belongs to the G-protein coupled receptor 3 family. In terms of assembly, may form a heterodimer with gbb-2. Expressed in the nervous system, including cholinergic motor neurons, but not in GABAergic motor neurons or muscle.

It is found in the cell membrane. Component of a heterodimeric G-protein coupled receptor for GABA, formed by gbb-1 and gbb-2. Within the heterodimeric GABA receptor, only gbb-1 seems to bind agonists, while gbb-2 mediates coupling to G proteins. Ligand binding causes a conformation change that triggers signaling via guanine nucleotide-binding proteins (G proteins) and modulates the activity of down-stream effectors, such as adenylate cyclase. Signaling inhibits adenylate cyclase, stimulates phospholipase A2, activates potassium channels, inactivates voltage-dependent calcium-channels and modulates inositol phospholipid hydrolysis. Calcium is required for high affinity binding to GABA. Plays a critical role in the fine-tuning of inhibitory synaptic transmission. Pre-synaptic GABA receptor inhibits neurotransmitter release by down-regulating high-voltage activated calcium channels, whereas postsynaptic GABA receptor decreases neuronal excitability by activating a prominent inwardly rectifying potassium (Kir) conductance that underlies the late inhibitory postsynaptic potentials. Along with gbb-2, may couple to the G(o)-alpha G-protein goa-1 to negatively regulate cholinergic receptor activity in the presence of high levels of acetylcholine in ventral cord motor neurons. As acetylcholine depolarizes body wall muscles, modulation of acetylcholine levels most likely results in the control of locomotory behavior. Acts in neurons to regulate lifespan, and this may be through G-protein-egl-8/PLC-beta signaling to the transcription factor daf-16/FOXO. The protein is Gamma-aminobutyric acid type B receptor subunit 1 of Caenorhabditis elegans.